The primary structure comprises 295 residues: Iodotyrosine deiodinase (295 aa).

The helical transmembrane segment at 3 to 23 (VFSSLTPVFVAVLCVIIGFLF) threads the bilayer. The segment at 29-81 (KESRSKQKPSDQTARPWVDEDLQDDTEISTKDNEENNEDWMDTTDEENLPHVP) is disordered. A compositionally biased stretch (acidic residues) spans 63–75 (ENNEDWMDTTDEE). Residues 106–110 (RRSVR), Ser134, and 134–135 (SG) each bind FMN. Positions 136, 163, 167, and 188 each coordinate 3-iodo-L-tyrosine. Residues 243 to 245 (TTT) and Arg285 each bind FMN.

This sequence belongs to the nitroreductase family. Requires FMN as cofactor.

Its subcellular location is the membrane. It catalyses the reaction 2 iodide + L-tyrosine + 2 NADP(+) = 3,5-diiodo-L-tyrosine + 2 NADPH + H(+). The catalysed reaction is iodide + L-tyrosine + NADP(+) = 3-iodo-L-tyrosine + NADPH. The enzyme catalyses 3-iodo-L-tyrosine + iodide + NADP(+) = 3,5-diiodo-L-tyrosine + NADPH + H(+). It carries out the reaction L-tyrosine + chloride + NADP(+) = 3-chloro-L-tyrosine + NADPH. It catalyses the reaction bromide + L-tyrosine + NADP(+) = 3-bromo-L-tyrosine + NADPH. Its function is as follows. Catalyzes the dehalogenation of halotyrosines such as 3,5-diiodo-L-tyrosine. Likely to also catalyze the dehalogenation of other halotyrosines such as 3-bromo-L-tyrosine, 3-chloro-L-tyrosine and 3-iodo-L-tyrosine. This is Iodotyrosine deiodinase (iyd) from Danio rerio (Zebrafish).